The primary structure comprises 370 residues: MEILMTVSKFASICTMGANASALEKEIGPEQFPVNEHYFGLVNFGNTCYCNSVLQALYFCRPFREKVLAYKSQPRKKENLLTCLADLFHSIATQKKKVGVIPPKKFITRLRKENELFDNYMQQDAHEFLNYLLNTIADILQEERKQEKQNGRLRNGDVDNEDNNSTPDPTWVHEIFQGTLTNETRCLTCETISSKDEDFLDLSVDVEQNTSITHCLRGFSNTETLCSEYKYYCEECRSKQEAHKRMKVKKLPLILALHLKRFKYMDQLHRYTKLSYRVVFPLELRLFNTSGDATNPDRMYDLVAVVVHCGSGPNRGHYIAIVKSHDFWLLFDDDIVEKIDAQAIEEFYGLTSDISKNSESGYILFYQSRD.

Residues 1–4 carry the Required for plasma membrane localization of USP12/WDR20 motif; the sequence is MEIL. The USP domain occupies 39-369; that stretch reads FGLVNFGNTC…SGYILFYQSR (331 aa). The active-site Nucleophile is Cys48. Basic and acidic residues predominate over residues 146 to 157; the sequence is QEKQNGRLRNGD. Residues 146 to 168 form a disordered region; the sequence is QEKQNGRLRNGDVDNEDNNSTPD. Zn(2+)-binding residues include Cys186, Cys189, Cys233, and Cys236. The active-site Proton acceptor is His317.

This sequence belongs to the peptidase C19 family. USP12/USP46 subfamily. As to quaternary structure, interacts with WDR48. Interacts with WDR20; this interaction promotes translocation of the USP12 complex to the plasma membrane. Component of the USP12/WDR20/WDR48 deubiquitinating complex. Component of the USP12/DMWD/WDR48 deubiquitinating complex. Interacts with PHLPP1. Interacts with RBPJ. Interacts with CBP; this interaction blocks the acetyltransferase activity of CREBBP.

The protein localises to the nucleus. It localises to the cytoplasm. Its subcellular location is the cell membrane. The enzyme catalyses Thiol-dependent hydrolysis of ester, thioester, amide, peptide and isopeptide bonds formed by the C-terminal Gly of ubiquitin (a 76-residue protein attached to proteins as an intracellular targeting signal).. Its activity is regulated as follows. Activated by interaction with WDR20; WDR48 and DMWD through different allosteric mechanisms. Deubiquitinating enzyme that plays various roles in the regulation of the immune response and inflammation. During TCR engagement and activation, translocates into the cytoplasm and deubiquitinates its substrates LAT and TRAT1 and prevents their lysosome-dependent degradation to stabilize the TCR signaling complex at the plasma membrane. Plays an essential role in the selective LPS-induced macrophage response through the activation of NF-kappa-B pathway. In addition, promotes that antiviral immune response through targeting DNA sensor IFI16 to inhibit its proteasome-dependent degradation. Participates in the interferon signaling pathway and antiviral response independently of its deubiquitinase activity by maintaining nuclear phosphorylated STAT1 levels via inhibition of its CREBBP-mediated acetylation and subsequent dephosphorylation. Plays an intrinsic role in promoting the differentiation, activation and proliferation of CD4(+) T-cell by activating the NF-kappa-B signaling pathway through deubiquitinating and stabilizing B-cell lymphoma/leukemia 10/BCL10. In myeloid-derived suppressor cells promotes the activation of the NF-kappa-B via deubiquitination and stabilization of RELA. Regulates the 'Lys-63'-linked polyubiquitin chains of BAX and thereby modulates the mitochondrial apoptotic process. Negative regulator of NOTCH signaling that specifically deubiquitinates non-activated NOTCH receptors to target them for lysosomal degradation; deubiquitination of NOTCH stimulates its transport form late endosomes to lysosomes. Protects neurons against HTT/huntingtin-induced polyglutamine expansion-dependent neurodegeneration through regulation of autophagic flux. This function is independent of deubiquitinase activity or of other components of the USP12-WDR20-WDR48 deubiquitinating complex. In complex with WDR48, acts as a potential tumor suppressor by positively regulating PHLPP1 stability. The protein is Ubiquitin carboxyl-terminal hydrolase 12 (Usp12) of Mus musculus (Mouse).